A 486-amino-acid chain; its full sequence is NADH-quinone oxidoreductase subunit N (486 aa).

The next 14 membrane-spanning stretches (helical) occupy residues 11 to 31 (ALPEIVLLIAVSAILIIDLFV), 44 to 64 (MLALVATGAATLAAWLPYPVL), 74 to 94 (PIASVAKLGLVVATGVAMIYA), 103 to 123 (FLKGELFTLMLFALLGMCVMV), 128 to 148 (MLTLYIGLELLSLALYALIAL), 163 to 183 (FVLGALASGLLLYGVSMVYGG), 206 to 226 (VSLGLVFIVAGLAFKLGAVPF), 238 to 258 (PTAVTLFVGSAPKLAAFVFVI), 267 to 287 (PAAVAWQPMLILLAIASLVVG), 300 to 320 (MLAYSTISHMGFMLIGILAAT), 328 to 348 (MFYAITYMLMALAGFGVLLAL), 371 to 391 (YALLVLLVMFSMAGIPPLVGF), 404 to 424 (VGLTWLAVVGVVMSLIGAFYY), and 452 to 472 (LVLGVNGLVLLGLGILPNGLY).

Belongs to the complex I subunit 2 family. NDH-1 is composed of 14 different subunits. Subunits NuoA, H, J, K, L, M, N constitute the membrane sector of the complex.

The protein resides in the cell inner membrane. The enzyme catalyses a quinone + NADH + 5 H(+)(in) = a quinol + NAD(+) + 4 H(+)(out). Functionally, NDH-1 shuttles electrons from NADH, via FMN and iron-sulfur (Fe-S) centers, to quinones in the respiratory chain. The immediate electron acceptor for the enzyme in this species is believed to be ubiquinone. Couples the redox reaction to proton translocation (for every two electrons transferred, four hydrogen ions are translocated across the cytoplasmic membrane), and thus conserves the redox energy in a proton gradient. This is NADH-quinone oxidoreductase subunit N from Laribacter hongkongensis (strain HLHK9).